The primary structure comprises 522 residues: Protein nucleotidyltransferase YdiU (522 aa).

8 residues coordinate ATP: Gly-109, Gly-111, Arg-112, Lys-132, Asp-144, Gly-145, Arg-195, and Arg-202. The active-site Proton acceptor is Asp-271. Asn-272 and Asp-281 together coordinate Mg(2+). Asp-281 is a binding site for ATP.

The protein belongs to the SELO family. Requires Mg(2+) as cofactor. It depends on Mn(2+) as a cofactor.

The catalysed reaction is L-seryl-[protein] + ATP = 3-O-(5'-adenylyl)-L-seryl-[protein] + diphosphate. The enzyme catalyses L-threonyl-[protein] + ATP = 3-O-(5'-adenylyl)-L-threonyl-[protein] + diphosphate. It carries out the reaction L-tyrosyl-[protein] + ATP = O-(5'-adenylyl)-L-tyrosyl-[protein] + diphosphate. It catalyses the reaction L-histidyl-[protein] + UTP = N(tele)-(5'-uridylyl)-L-histidyl-[protein] + diphosphate. The catalysed reaction is L-seryl-[protein] + UTP = O-(5'-uridylyl)-L-seryl-[protein] + diphosphate. The enzyme catalyses L-tyrosyl-[protein] + UTP = O-(5'-uridylyl)-L-tyrosyl-[protein] + diphosphate. Nucleotidyltransferase involved in the post-translational modification of proteins. It can catalyze the addition of adenosine monophosphate (AMP) or uridine monophosphate (UMP) to a protein, resulting in modifications known as AMPylation and UMPylation. In Burkholderia vietnamiensis (strain G4 / LMG 22486) (Burkholderia cepacia (strain R1808)), this protein is Protein nucleotidyltransferase YdiU.